The primary structure comprises 128 residues: Large ribosomal subunit protein mL51 (128 aa).

Residues 1 to 31 constitute a mitochondrion transit peptide; sequence MAGNLLSGAGRRLWDWVPLACRSFSLGVPRL.

The protein belongs to the mitochondrion-specific ribosomal protein mL51 family. Component of the mitochondrial large ribosomal subunit (mt-LSU). Mature mammalian 55S mitochondrial ribosomes consist of a small (28S) and a large (39S) subunit. The 28S small subunit contains a 12S ribosomal RNA (12S mt-rRNA) and 30 different proteins. The 39S large subunit contains a 16S rRNA (16S mt-rRNA), a copy of mitochondrial valine transfer RNA (mt-tRNA(Val)), which plays an integral structural role, and 52 different proteins. Interacts with OXA1L.

The protein resides in the mitochondrion. In Homo sapiens (Human), this protein is Large ribosomal subunit protein mL51 (MRPL51).